A 478-amino-acid polypeptide reads, in one-letter code: Protein nucleotidyltransferase YdiU (478 aa).

ATP contacts are provided by glycine 84, glycine 86, arginine 87, lysine 107, aspartate 119, glycine 120, arginine 170, and arginine 177. The Proton acceptor role is filled by aspartate 246. Residues asparagine 247 and aspartate 256 each contribute to the Mg(2+) site. Aspartate 256 provides a ligand contact to ATP.

Belongs to the SELO family. Mg(2+) serves as cofactor. It depends on Mn(2+) as a cofactor.

It catalyses the reaction L-seryl-[protein] + ATP = 3-O-(5'-adenylyl)-L-seryl-[protein] + diphosphate. It carries out the reaction L-threonyl-[protein] + ATP = 3-O-(5'-adenylyl)-L-threonyl-[protein] + diphosphate. The enzyme catalyses L-tyrosyl-[protein] + ATP = O-(5'-adenylyl)-L-tyrosyl-[protein] + diphosphate. The catalysed reaction is L-histidyl-[protein] + UTP = N(tele)-(5'-uridylyl)-L-histidyl-[protein] + diphosphate. It catalyses the reaction L-seryl-[protein] + UTP = O-(5'-uridylyl)-L-seryl-[protein] + diphosphate. It carries out the reaction L-tyrosyl-[protein] + UTP = O-(5'-uridylyl)-L-tyrosyl-[protein] + diphosphate. Functionally, nucleotidyltransferase involved in the post-translational modification of proteins. It can catalyze the addition of adenosine monophosphate (AMP) or uridine monophosphate (UMP) to a protein, resulting in modifications known as AMPylation and UMPylation. In Escherichia coli O127:H6 (strain E2348/69 / EPEC), this protein is Protein nucleotidyltransferase YdiU.